A 90-amino-acid chain; its full sequence is Small ribosomal subunit protein uS15c (90 aa).

The protein belongs to the universal ribosomal protein uS15 family. In terms of assembly, part of the 30S ribosomal subunit.

The protein localises to the plastid. The protein resides in the chloroplast. The polypeptide is Small ribosomal subunit protein uS15c (rps15) (Liriodendron tulipifera (Tuliptree)).